We begin with the raw amino-acid sequence, 232 residues long: MGQKVHPNGIRLGIVKAWNSTWYANTKEFADNLDSDFKVRQFLTKELAKASVSRIVIERPAKSIRVTIHTARPGIVIGKKGEDVEKLRKVVADIAGVPAQINIAEVRKPELDAKLVADSIISQLERRVMFRRAMKRAVQNAMRLGAKGIKVEVSGRLGGAEIARTEWYREGRVPLHTLRADIDYNTSEAHTTYGVIGVKVWIFKGEILGGMAAVEQPEPAAQPKKQQRKGRK.

The KH type-2 domain maps to 39-107; it reads VRQFLTKELA…PAQINIAEVR (69 aa).

The protein belongs to the universal ribosomal protein uS3 family. In terms of assembly, part of the 30S ribosomal subunit. Forms a tight complex with proteins S10 and S14.

In terms of biological role, binds the lower part of the 30S subunit head. Binds mRNA in the 70S ribosome, positioning it for translation. The protein is Small ribosomal subunit protein uS3 of Yersinia pestis bv. Antiqua (strain Antiqua).